We begin with the raw amino-acid sequence, 558 residues long: Dihydroxy-acid dehydratase (558 aa).

C54 is a [2Fe-2S] cluster binding site. Residue D86 coordinates Mg(2+). C127 is a binding site for [2Fe-2S] cluster. Mg(2+) is bound by residues D128 and K129. K129 is subject to N6-carboxylysine. Residue C199 participates in [2Fe-2S] cluster binding. E448 is a Mg(2+) binding site. S474 functions as the Proton acceptor in the catalytic mechanism.

It belongs to the IlvD/Edd family. In terms of assembly, homodimer. [2Fe-2S] cluster serves as cofactor. The cofactor is Mg(2+).

It catalyses the reaction (2R)-2,3-dihydroxy-3-methylbutanoate = 3-methyl-2-oxobutanoate + H2O. The catalysed reaction is (2R,3R)-2,3-dihydroxy-3-methylpentanoate = (S)-3-methyl-2-oxopentanoate + H2O. It functions in the pathway amino-acid biosynthesis; L-isoleucine biosynthesis; L-isoleucine from 2-oxobutanoate: step 3/4. It participates in amino-acid biosynthesis; L-valine biosynthesis; L-valine from pyruvate: step 3/4. In terms of biological role, functions in the biosynthesis of branched-chain amino acids. Catalyzes the dehydration of (2R,3R)-2,3-dihydroxy-3-methylpentanoate (2,3-dihydroxy-3-methylvalerate) into 2-oxo-3-methylpentanoate (2-oxo-3-methylvalerate) and of (2R)-2,3-dihydroxy-3-methylbutanoate (2,3-dihydroxyisovalerate) into 2-oxo-3-methylbutanoate (2-oxoisovalerate), the penultimate precursor to L-isoleucine and L-valine, respectively. The chain is Dihydroxy-acid dehydratase from Acidothermus cellulolyticus (strain ATCC 43068 / DSM 8971 / 11B).